The sequence spans 874 residues: Oxidation resistance protein 1 (874 aa).

The segment at 1 to 89 is disordered; the sequence is MTKDKNSPGL…KTLDKKDGRR (89 aa). Positions 64–89 are enriched in basic and acidic residues; that stretch reads RRSELKRFYTIDTGQKKTLDKKDGRR. The residue at position 91 (Ser91) is a Phosphoserine. In terms of domain architecture, LysM spans 99 to 142; the sequence is IEYTVESRDSLNSIALKFDTTPNELVQLNKLFSRAVVTGQVLYV. Residue Thr119 is modified to Phosphothreonine. Low complexity predominate over residues 151–169; that stretch reads VESSPSLSPVSPLSPTSSE. The disordered stretch occupies residues 151–194; sequence VESSPSLSPVSPLSPTSSEAEFDKTTNPDVHPTEATPSSTFTGI. A phosphoserine mark is found at Ser201, Ser202, and Ser204. In terms of domain architecture, GRAM spans 208–275; the sequence is EAFTEKFLKI…EEVMSAAMYK (68 aa). A phosphoserine mark is found at Ser294, Ser334, and Ser336. Disordered stretches follow at residues 299-406 and 431-537; these read CHSK…TNEV and FQGI…ITSA. Thr341 carries the post-translational modification Phosphothreonine. The residue at position 346 (Ser346) is a Phosphoserine. Residues 347-362 are compositionally biased toward basic and acidic residues; the sequence is PIREELVSSDELRQDK. Polar residues predominate over residues 363 to 391; it reads SSGASSESVQTVNQAEVESLTVKSESTGT. A compositionally biased stretch (basic and acidic residues) spans 452–466; that stretch reads SFLHENSLHQEESQK. Phosphoserine is present on Ser496. The span at 510–527 shows a compositional bias: polar residues; that stretch reads HTMQQTKQQRENIQQVSQ. Residues 551–578 are mediates oxidative antimutator activity; the sequence is QRHRLHKFLCLRVGKPMRKTFVSQASAT. In terms of domain architecture, TLDc spans 713 to 874; sequence ELLLPDQIEK…IQDIEIWAFE (162 aa).

The protein belongs to the OXR1 family.

It localises to the mitochondrion. May be involved in protection from oxidative damage. This is Oxidation resistance protein 1 (OXR1) from Homo sapiens (Human).